The sequence spans 341 residues: MKLEDFDFELPEDRIAQHPVEPRDSSRLMVMNRWTGEIEHRVFRELPELLQAGDVLVVNNTRVIPARLIGEKEGTQAKIECLLLTRRDKDVWETLIKPGKRLKAGQTVVFGDGLLRGELLEILPDGNRLVRFNYQGIFEEVLDQLGNMPLPPYITEQLQDKERYQTIYAKESGSAAAPTAGLHFTPELLERLQDKGVEIVEILLHVGLGTFRPVKVENVEEHTMHSEYYRVTPDAAERINRAKSQGRRVIAVGTTASRTLESVAGENGRIEGKEGWTDIYIYPGYTFKILDGLITNFHFPKSTLVMLVSALAGRDQILKAYQIAIAEGYRFYSFGDAMMIL.

Belongs to the QueA family. As to quaternary structure, monomer.

It localises to the cytoplasm. The catalysed reaction is 7-aminomethyl-7-carbaguanosine(34) in tRNA + S-adenosyl-L-methionine = epoxyqueuosine(34) in tRNA + adenine + L-methionine + 2 H(+). It participates in tRNA modification; tRNA-queuosine biosynthesis. Its function is as follows. Transfers and isomerizes the ribose moiety from AdoMet to the 7-aminomethyl group of 7-deazaguanine (preQ1-tRNA) to give epoxyqueuosine (oQ-tRNA). The polypeptide is S-adenosylmethionine:tRNA ribosyltransferase-isomerase (Desulfitobacterium hafniense (strain DSM 10664 / DCB-2)).